Consider the following 353-residue polypeptide: Thiamine thiazole synthase 1, chloroplastic (353 aa).

The N-terminal 48 residues, 1 to 48, are a transit peptide targeting the chloroplast; the sequence is MATLTSSICSKPKASVFDPHKSSFHGVPIATQARLSPVKSTPVNLAVT. Substrate contacts are provided by residues alanine 97, 117 to 118, glycine 125, and alanine 190; that span reads EQ. Cysteine 219 bears the 2,3-didehydroalanine (Cys) mark. Residues aspartate 221, histidine 236, methionine 288, and 298–300 each bind substrate; that span reads RMG.

This sequence belongs to the THI4 family. In terms of assembly, homooctamer. Fe cation is required as a cofactor. In terms of processing, during the catalytic reaction, a sulfide is transferred from Cys-219 to a reaction intermediate, generating a dehydroalanine residue.

The protein resides in the plastid. It localises to the chloroplast. The catalysed reaction is [ADP-thiazole synthase]-L-cysteine + glycine + NAD(+) = [ADP-thiazole synthase]-dehydroalanine + ADP-5-ethyl-4-methylthiazole-2-carboxylate + nicotinamide + 3 H2O + 2 H(+). In terms of biological role, involved in biosynthesis of the thiamine precursor thiazole. Catalyzes the conversion of NAD and glycine to adenosine diphosphate 5-(2-hydroxyethyl)-4-methylthiazole-2-carboxylic acid (ADT), an adenylated thiazole intermediate. The reaction includes an iron-dependent sulfide transfer from a conserved cysteine residue of the protein to a thiazole intermediate. The enzyme can only undergo a single turnover, which suggests it is a suicide enzyme. May have additional roles in adaptation to various stress conditions and in DNA damage tolerance. The chain is Thiamine thiazole synthase 1, chloroplastic from Vitis vinifera (Grape).